The chain runs to 228 residues: Small ribosomal subunit protein uS3 (228 aa).

The KH type-2 domain occupies 39–107 (VREYLQDKLK…PVHINIEEIR (69 aa)).

The protein belongs to the universal ribosomal protein uS3 family. In terms of assembly, part of the 30S ribosomal subunit. Forms a tight complex with proteins S10 and S14.

Functionally, binds the lower part of the 30S subunit head. Binds mRNA in the 70S ribosome, positioning it for translation. This chain is Small ribosomal subunit protein uS3, found in Stutzerimonas stutzeri (strain A1501) (Pseudomonas stutzeri).